A 201-amino-acid chain; its full sequence is 3-isopropylmalate dehydratase small subunit (201 aa).

This sequence belongs to the LeuD family. LeuD type 1 subfamily. Heterodimer of LeuC and LeuD.

It carries out the reaction (2R,3S)-3-isopropylmalate = (2S)-2-isopropylmalate. Its pathway is amino-acid biosynthesis; L-leucine biosynthesis; L-leucine from 3-methyl-2-oxobutanoate: step 2/4. Its function is as follows. Catalyzes the isomerization between 2-isopropylmalate and 3-isopropylmalate, via the formation of 2-isopropylmaleate. The chain is 3-isopropylmalate dehydratase small subunit from Escherichia coli O9:H4 (strain HS).